Consider the following 602-residue polypeptide: DEAD-box ATP-dependent RNA helicase 52A (602 aa).

The segment at 9 to 31 (KSVEAGGEPGGGGGGAWSTVSRS) is disordered. The segment covering 15–24 (GEPGGGGGGA) has biased composition (gly residues). Positions 84–112 (DGFEAAGLVEAVLRNVARCGYESPTPVQR) match the Q motif motif. In terms of domain architecture, Helicase ATP-binding spans 115–305 (MPIALAGRDL…SDFLSNYIFI (191 aa)). Position 128–135 (128–135 (AQTGSGKT)) interacts with ATP. Positions 249 to 252 (DEAD) match the DEAD box motif. Positions 328–485 (EKRGYLLDLL…DVPDWLVQYA (158 aa)) constitute a Helicase C-terminal domain. Disordered regions lie at residues 492–521 (GSSYGGRNRRSGGGGNRFAGRDFRQGSGGG) and 552–602 (RGGG…SGWD). Over residues 552–574 (RGGGYSRGGRGGYSGGGGGGGGD) the composition is skewed to gly residues.

This sequence belongs to the DEAD box helicase family. DDX3/DED1 subfamily.

It catalyses the reaction ATP + H2O = ADP + phosphate + H(+). The sequence is that of DEAD-box ATP-dependent RNA helicase 52A from Oryza sativa subsp. japonica (Rice).